Reading from the N-terminus, the 455-residue chain is Glutamyl-tRNA reductase (455 aa).

Substrate contacts are provided by residues 49-52 (TCNR), Ser-109, 114-116 (ETQ), and Gln-120. The Nucleophile role is filled by Cys-50. An NADP(+)-binding site is contributed by 189–194 (GAGKMG).

Belongs to the glutamyl-tRNA reductase family. As to quaternary structure, homodimer.

The enzyme catalyses (S)-4-amino-5-oxopentanoate + tRNA(Glu) + NADP(+) = L-glutamyl-tRNA(Glu) + NADPH + H(+). Its pathway is porphyrin-containing compound metabolism; protoporphyrin-IX biosynthesis; 5-aminolevulinate from L-glutamyl-tRNA(Glu): step 1/2. In terms of biological role, catalyzes the NADPH-dependent reduction of glutamyl-tRNA(Glu) to glutamate 1-semialdehyde (GSA). This is Glutamyl-tRNA reductase from Bacillus pumilus (strain SAFR-032).